The primary structure comprises 45 residues: Photosystem II reaction center protein K (45 aa).

A propeptide spanning residues 1–8 (MDFALLLA) is cleaved from the precursor. Residues 24–44 (LPLIPLFFLLLAFVWQAAVGF) form a helical membrane-spanning segment.

This sequence belongs to the PsbK family. In terms of assembly, PSII is composed of 1 copy each of membrane proteins PsbA, PsbB, PsbC, PsbD, PsbE, PsbF, PsbH, PsbI, PsbJ, PsbK, PsbL, PsbM, PsbT, PsbX, PsbY, PsbZ, Psb30/Ycf12, peripheral proteins PsbO, CyanoQ (PsbQ), PsbU, PsbV and a large number of cofactors. It forms dimeric complexes.

It localises to the cellular thylakoid membrane. Its function is as follows. One of the components of the core complex of photosystem II (PSII). PSII is a light-driven water:plastoquinone oxidoreductase that uses light energy to abstract electrons from H(2)O, generating O(2) and a proton gradient subsequently used for ATP formation. It consists of a core antenna complex that captures photons, and an electron transfer chain that converts photonic excitation into a charge separation. This is Photosystem II reaction center protein K from Gloeothece citriformis (strain PCC 7424) (Cyanothece sp. (strain PCC 7424)).